Reading from the N-terminus, the 1035-residue chain is POM121-like protein 2 (1035 aa).

Disordered stretches follow at residues 1-37, 177-213, 286-343, 415-508, 754-791, and 972-1035; these read MGSF…PLHQ, LFPE…PRPG, IKKE…LGYA, LGPL…QSTL, SPLG…QPAL, and NTPV…AYKK. A compositionally biased stretch (basic residues) spans 27–37; the sequence is TKRRPPQPLHQ. The segment covering 309–319 has biased composition (low complexity); it reads GGSESSGQQNQ. 3 stretches are compositionally biased toward polar residues: residues 320–330, 420–431, and 445–462; these read KIPQLPSSPEN, SPQSTGEATSVA, and GCSQ…SKPT. Over residues 464 to 481 the composition is skewed to low complexity; sequence TFILLTPTSPTLPVTDTT. Pro residues predominate over residues 493 to 502; sequence PMPPDPPAPP. Low complexity predominate over residues 1000-1016; sequence RGPFRSSASSFSIGAKS. Over residues 1017 to 1035 the composition is skewed to basic residues; it reads KTPKNREKGHSRRHHAYKK.

It belongs to the POM121 family.

This Homo sapiens (Human) protein is POM121-like protein 2 (POM121L2).